We begin with the raw amino-acid sequence, 223 residues long: Kynurenine formamidase (223 aa).

Phe34 lines the substrate pocket. Zn(2+) contacts are provided by His64, His68, and Asp70. Catalysis depends on His74, which acts as the Proton donor/acceptor. Residues His174 and Glu186 each coordinate Zn(2+).

The protein belongs to the Cyclase 1 superfamily. KynB family. As to quaternary structure, homodimer. It depends on Zn(2+) as a cofactor.

The enzyme catalyses N-formyl-L-kynurenine + H2O = L-kynurenine + formate + H(+). It functions in the pathway amino-acid degradation; L-tryptophan degradation via kynurenine pathway; L-kynurenine from L-tryptophan: step 2/2. In terms of biological role, catalyzes the hydrolysis of N-formyl-L-kynurenine to L-kynurenine, the second step in the kynurenine pathway of tryptophan degradation. The protein is Kynurenine formamidase of Polaromonas naphthalenivorans (strain CJ2).